A 368-amino-acid chain; its full sequence is tRNA-specific 2-thiouridylase MnmA (368 aa).

ATP-binding positions include 6–13 (ALSGGVDS) and Met-32. The active-site Nucleophile is Cys-92. A disulfide bridge links Cys-92 with Cys-186. Gly-116 is an ATP binding site. The tract at residues 134-136 (KDQ) is interaction with tRNA. Cys-186 functions as the Cysteine persulfide intermediate in the catalytic mechanism. Positions 292-293 (RY) are interaction with tRNA.

It belongs to the MnmA/TRMU family.

It localises to the cytoplasm. It catalyses the reaction S-sulfanyl-L-cysteinyl-[protein] + uridine(34) in tRNA + AH2 + ATP = 2-thiouridine(34) in tRNA + L-cysteinyl-[protein] + A + AMP + diphosphate + H(+). In terms of biological role, catalyzes the 2-thiolation of uridine at the wobble position (U34) of tRNA, leading to the formation of s(2)U34. In Campylobacter hominis (strain ATCC BAA-381 / DSM 21671 / CCUG 45161 / LMG 19568 / NCTC 13146 / CH001A), this protein is tRNA-specific 2-thiouridylase MnmA.